Reading from the N-terminus, the 358-residue chain is Mannonate dehydratase (358 aa).

This sequence belongs to the mannonate dehydratase family. Fe(2+) is required as a cofactor. Mn(2+) serves as cofactor.

It carries out the reaction D-mannonate = 2-dehydro-3-deoxy-D-gluconate + H2O. It participates in carbohydrate metabolism; pentose and glucuronate interconversion. Functionally, catalyzes the dehydration of D-mannonate. The polypeptide is Mannonate dehydratase (Shouchella clausii (strain KSM-K16) (Alkalihalobacillus clausii)).